Reading from the N-terminus, the 504-residue chain is Glucose-6-phosphate isomerase (504 aa).

The active-site Proton donor is E333. Active-site residues include H364 and K473.

This sequence belongs to the GPI family.

It localises to the cytoplasm. It carries out the reaction alpha-D-glucose 6-phosphate = beta-D-fructose 6-phosphate. Its pathway is carbohydrate biosynthesis; gluconeogenesis. It functions in the pathway carbohydrate degradation; glycolysis; D-glyceraldehyde 3-phosphate and glycerone phosphate from D-glucose: step 2/4. Catalyzes the reversible isomerization of glucose-6-phosphate to fructose-6-phosphate. This is Glucose-6-phosphate isomerase from Stenotrophomonas maltophilia (strain R551-3).